The sequence spans 204 residues: Octanoyltransferase (204 aa).

In terms of domain architecture, BPL/LPL catalytic spans 27-202 (QGGEEALLLL…RFQPFLHLHL (176 aa)). Residues 65–72 (RGGDVTYH), 132–134 (SIG), and 145–147 (GFA) each bind substrate. Cys-163 serves as the catalytic Acyl-thioester intermediate.

The protein belongs to the LipB family.

It localises to the cytoplasm. The catalysed reaction is octanoyl-[ACP] + L-lysyl-[protein] = N(6)-octanoyl-L-lysyl-[protein] + holo-[ACP] + H(+). Its pathway is protein modification; protein lipoylation via endogenous pathway; protein N(6)-(lipoyl)lysine from octanoyl-[acyl-carrier-protein]: step 1/2. Functionally, catalyzes the transfer of endogenously produced octanoic acid from octanoyl-acyl-carrier-protein onto the lipoyl domains of lipoate-dependent enzymes. Lipoyl-ACP can also act as a substrate although octanoyl-ACP is likely to be the physiological substrate. The sequence is that of Octanoyltransferase from Geobacter sp. (strain M21).